Consider the following 139-residue polypeptide: Ribonuclease P protein component (139 aa).

The tract at residues 120-139 (KPTTGVEYSPKNEKCESVLP) is disordered. Residues 129-139 (PKNEKCESVLP) are compositionally biased toward basic and acidic residues.

This sequence belongs to the RnpA family. In terms of assembly, consists of a catalytic RNA component (M1 or rnpB) and a protein subunit.

The enzyme catalyses Endonucleolytic cleavage of RNA, removing 5'-extranucleotides from tRNA precursor.. In terms of biological role, RNaseP catalyzes the removal of the 5'-leader sequence from pre-tRNA to produce the mature 5'-terminus. It can also cleave other RNA substrates such as 4.5S RNA. The protein component plays an auxiliary but essential role in vivo by binding to the 5'-leader sequence and broadening the substrate specificity of the ribozyme. The sequence is that of Ribonuclease P protein component from Chlamydia caviae (strain ATCC VR-813 / DSM 19441 / 03DC25 / GPIC) (Chlamydophila caviae).